The following is a 228-amino-acid chain: Ribulose-phosphate 3-epimerase (228 aa).

A substrate-binding site is contributed by serine 9. Positions 34, 36, and 70 each coordinate a divalent metal cation. Aspartate 36 acts as the Proton acceptor in catalysis. Substrate is bound by residues histidine 70, 146 to 149 (GFPG), 179 to 181 (DGG), and 201 to 202 (GS). Position 179 (aspartate 179) interacts with a divalent metal cation. The active-site Proton donor is the aspartate 179.

Belongs to the ribulose-phosphate 3-epimerase family. The cofactor is a divalent metal cation.

It catalyses the reaction D-ribulose 5-phosphate = D-xylulose 5-phosphate. The protein operates within carbohydrate degradation. Functionally, catalyzes the reversible epimerization of D-ribulose 5-phosphate to D-xylulose 5-phosphate. The polypeptide is Ribulose-phosphate 3-epimerase (Buchnera aphidicola subsp. Baizongia pistaciae (strain Bp)).